Here is an 89-residue protein sequence, read N- to C-terminus: Small ribosomal subunit protein uS15 (89 aa).

The segment covering 1-10 (MSITAEKKQE) has biased composition (basic and acidic residues). Positions 1-24 (MSITAEKKQEVIQSNARAEGDTGS) are disordered.

This sequence belongs to the universal ribosomal protein uS15 family. Part of the 30S ribosomal subunit. Forms a bridge to the 50S subunit in the 70S ribosome, contacting the 23S rRNA.

Its function is as follows. One of the primary rRNA binding proteins, it binds directly to 16S rRNA where it helps nucleate assembly of the platform of the 30S subunit by binding and bridging several RNA helices of the 16S rRNA. Functionally, forms an intersubunit bridge (bridge B4) with the 23S rRNA of the 50S subunit in the ribosome. In Novosphingobium aromaticivorans (strain ATCC 700278 / DSM 12444 / CCUG 56034 / CIP 105152 / NBRC 16084 / F199), this protein is Small ribosomal subunit protein uS15.